The chain runs to 551 residues: L-lactate permease (551 aa).

The next 13 membrane-spanning stretches (helical) occupy residues 13–33, 37–57, 69–89, 131–151, 159–179, 194–214, 220–240, 244–264, 366–386, 405–425, 438–458, 494–514, and 530–550; these read NIWL…FALI, LKGY…ALLF, VVYG…AAVF, GAAG…GLGF, LCLI…PILV, MVGR…MAIM, IKET…AQYL, FIGP…CLTL, FDWF…SIVW, LALP…SNYS, TGHA…FLTG, VTGK…VGLV, and IFTC…TWMI.

It belongs to the lactate permease family.

Its subcellular location is the cell inner membrane. The catalysed reaction is (S)-lactate(in) + H(+)(in) = (S)-lactate(out) + H(+)(out). The enzyme catalyses (R)-lactate(in) + H(+)(in) = (R)-lactate(out) + H(+)(out). It catalyses the reaction glycolate(in) + H(+)(in) = glycolate(out) + H(+)(out). Its activity is regulated as follows. Inhibited by the proton ionophore carbonyl cyanide m-chlorophenylhydrazone (CCCP). In terms of biological role, uptake of L-lactate across the membrane. Can also transport D-lactate and glycolate. Seems to be driven by a proton motive force. The protein is L-lactate permease of Escherichia coli (strain K12).